The sequence spans 331 residues: 6-phosphogluconolactonase (331 aa).

N6-acetyllysine is present on lysine 287.

This sequence belongs to the cycloisomerase 2 family.

It carries out the reaction 6-phospho-D-glucono-1,5-lactone + H2O = 6-phospho-D-gluconate + H(+). It functions in the pathway carbohydrate degradation; pentose phosphate pathway; D-ribulose 5-phosphate from D-glucose 6-phosphate (oxidative stage): step 2/3. Functionally, catalyzes the hydrolysis of 6-phosphogluconolactone to 6-phosphogluconate. In Shigella flexneri, this protein is 6-phosphogluconolactonase.